We begin with the raw amino-acid sequence, 227 residues long: uncharacterized protein (227 aa).

This is an uncharacterized protein from Caenorhabditis elegans.